The following is a 600-amino-acid chain: Chaperonin 60 subunit beta 1, chloroplastic (600 aa).

Residues 1–12 show a composition bias toward polar residues; it reads MASTFTATSSIG. The disordered stretch occupies residues 1–23; that stretch reads MASTFTATSSIGSMVAPNGHKSD. A chloroplast-targeting transit peptide spans 1-54; it reads MASTFTATSSIGSMVAPNGHKSDKKLISKLSSSSFGRRQSVCPRPRRSSSAIVC. Residues Ser101 and Ser478 each carry the phosphoserine modification.

This sequence belongs to the chaperonin (HSP60) family. In terms of assembly, part of the Cpn60 complex composed of 7 alpha and 7 beta subunits. Can also form a complex composed of 14 beta subunits only. Both complexes show ATPase activity. The Cpn60 complex interacts with the Cpn10 complex. Interacts with RAB during heat stress. Expressed in leaves, stems, petioles and flowers.

It localises to the plastid. The protein resides in the chloroplast stroma. Functionally, binds RuBisCO small and large subunits and is implicated in the assembly of the enzyme oligomer. Involved in protein assisted folding. Required for proper plastid division. The polypeptide is Chaperonin 60 subunit beta 1, chloroplastic (CPN60B1) (Arabidopsis thaliana (Mouse-ear cress)).